We begin with the raw amino-acid sequence, 434 residues long: Putative magnesium transporter MRS2-D (434 aa).

Disordered regions lie at residues 1–21 (MAAR…AAGE), 126–171 (AASP…DGEA), and 279–311 (EASE…AGGG). The segment covering 9 to 21 (AAGAGAPAPAAGE) has biased composition (low complexity). Residues 279-291 (EASELEDHSSRDE) are compositionally biased toward basic and acidic residues. Transmembrane regions (helical) follow at residues 367 to 387 (GILL…TGVF) and 405 to 425 (FPCA…AALL).

This sequence belongs to the CorA metal ion transporter (MIT) (TC 1.A.35.5) family.

The protein resides in the membrane. Functionally, putative magnesium transporter. The chain is Putative magnesium transporter MRS2-D (MRS2-D) from Oryza sativa subsp. indica (Rice).